The primary structure comprises 159 residues: MAEQVVEILVSGGKATAGPPLGPAIGPLGVNIMQVVQKINEMTKDYDGMSVPVKVIVNTDKRTFEVEVGIPPASALVKKELGITTGSQEPKHQVAGNLTMEQVVKIAKMKQDAMLAYNLKNASKEVIGTCVSVGVNVEGMTPKEAQKAVDAGQFDSYFN.

This sequence belongs to the universal ribosomal protein uL11 family. In terms of assembly, part of the ribosomal stalk of the 50S ribosomal subunit. Interacts with L10 and the large rRNA to form the base of the stalk. L10 forms an elongated spine to which L12 dimers bind in a sequential fashion forming a multimeric L10(L12)X complex.

Forms part of the ribosomal stalk which helps the ribosome interact with GTP-bound translation factors. The protein is Large ribosomal subunit protein uL11 of Methanococcus maripaludis (strain C6 / ATCC BAA-1332).